Reading from the N-terminus, the 673-residue chain is DNA ligase (673 aa).

Residues 32 to 36 (DAEYD), 81 to 82 (SL), and glutamate 113 each bind NAD(+). Lysine 115 serves as the catalytic N6-AMP-lysine intermediate. The NAD(+) site is built by arginine 136, glutamate 173, lysine 290, and lysine 314. Cysteine 408, cysteine 411, cysteine 426, and cysteine 432 together coordinate Zn(2+). The region spanning 595 to 673 (EIDSPFAGKT…EAEMIRLLGA (79 aa)) is the BRCT domain.

This sequence belongs to the NAD-dependent DNA ligase family. LigA subfamily. Mg(2+) is required as a cofactor. It depends on Mn(2+) as a cofactor.

It carries out the reaction NAD(+) + (deoxyribonucleotide)n-3'-hydroxyl + 5'-phospho-(deoxyribonucleotide)m = (deoxyribonucleotide)n+m + AMP + beta-nicotinamide D-nucleotide.. DNA ligase that catalyzes the formation of phosphodiester linkages between 5'-phosphoryl and 3'-hydroxyl groups in double-stranded DNA using NAD as a coenzyme and as the energy source for the reaction. It is essential for DNA replication and repair of damaged DNA. In Serratia proteamaculans (strain 568), this protein is DNA ligase.